Reading from the N-terminus, the 390-residue chain is 5-hydroxytryptamine receptor 1B (390 aa).

The interval 1–21 is disordered; sequence MEETGAQCAPPPPAGSQTGVS. Residues 1-46 are Extracellular-facing; the sequence is MEETGAQCAPPPPAGSQTGVSQVNLSAAPSHNCSTEGYVYQDSVAL. N-linked (GlcNAc...) asparagine glycans are attached at residues N24 and N32. A helical transmembrane segment spans residues 47–72; sequence PWKVLLVVLLALITLATTLSNAFVIA. Residues 73–86 are Cytoplasmic-facing; that stretch reads TVYRTRKLHTPANY. A helical transmembrane segment spans residues 87 to 111; that stretch reads LIASLAVTDLLVSILVMPISTMYVV. Topologically, residues 112–119 are extracellular; sequence TGRWTLGQ. The chain crosses the membrane as a helical span at residues 120–145; that stretch reads VVCDFWLSSDITCCTASILHLCVIAL. A disulfide bridge links C122 with C199. Ergotamine-binding residues include D129 and T134. The short motif at 146-148 is the DRY motif; important for ligand-induced conformation changes and signaling element; that stretch reads DRY. The Cytoplasmic portion of the chain corresponds to 146 to 165; it reads DRYWAITDAVEYSAKRTPKR. Residues 166 to 184 form a helical membrane-spanning segment; the sequence is AAVMIALVWVFSISISLPP. At 185-205 the chain is on the extracellular side; sequence FFWRQAKAEEEVLDCLVNTDH. Residue V201 participates in ergotamine binding. Residues 206–229 traverse the membrane as a helical segment; the sequence is ILYTVYSTVGAFYFPTLLLIALYS. Residues 230–315 are Cytoplasmic-facing; sequence RIYVEARSRI…AARERKATKT (86 aa). Residues 251 to 282 are disordered; sequence LTRAQLMTDSPGSTSSVTSINSRAPDVPSESG. Over residues 255 to 272 the composition is skewed to polar residues; that stretch reads QLMTDSPGSTSSVTSINS. A helical transmembrane segment spans residues 316–337; the sequence is LGIILGAFIVCWLPFFIISLVM. Residues 338-347 lie on the Extracellular side of the membrane; it reads PICKDACWFH. The chain crosses the membrane as a helical span at residues 348–370; the sequence is LAIFDFFTWLGYLNSLINPIIYT. The short motif at 365 to 369 is the NPxxY motif; important for ligand-induced conformation changes and signaling element; it reads NPIIY. The Cytoplasmic portion of the chain corresponds to 371–390; sequence MSNEDFKQAFHKLIRFKCAS. C388 carries the S-palmitoyl cysteine lipid modification.

Belongs to the G-protein coupled receptor 1 family. Homodimer. Heterodimer with HTR1D. Post-translationally, phosphorylated. Desensitization of the receptor may be mediated by its phosphorylation. In terms of processing, palmitoylated.

The protein localises to the cell membrane. Functionally, G-protein coupled receptor for 5-hydroxytryptamine (serotonin). Also functions as a receptor for ergot alkaloid derivatives, various anxiolytic and antidepressant drugs and other psychoactive substances, such as lysergic acid diethylamide (LSD). Ligand binding causes a conformation change that triggers signaling via guanine nucleotide-binding proteins (G proteins) and modulates the activity of downstream effectors, such as adenylate cyclase. HTR1B is coupled to G(i)/G(o) G alpha proteins and mediates inhibitory neurotransmission by inhibiting adenylate cyclase activity. Arrestin family members inhibit signaling via G proteins and mediate activation of alternative signaling pathways. Regulates the release of 5-hydroxytryptamine, dopamine and acetylcholine in the brain, and thereby affects neural activity, nociceptive processing, pain perception, mood and behavior. Besides, plays a role in vasoconstriction of cerebral arteries. The chain is 5-hydroxytryptamine receptor 1B (HTR1B) from Equus caballus (Horse).